The sequence spans 62 residues: Large ribosomal subunit protein uL29 (62 aa).

This sequence belongs to the universal ribosomal protein uL29 family.

The polypeptide is Large ribosomal subunit protein uL29 (Desulfosudis oleivorans (strain DSM 6200 / JCM 39069 / Hxd3) (Desulfococcus oleovorans)).